Consider the following 379-residue polypeptide: Putative cysteine desulfurase IscS 1 (379 aa).

Residues 71–72, Asn151, Gln179, and 199–201 each bind pyridoxal 5'-phosphate; these read GT and SGH. N6-(pyridoxal phosphate)lysine is present on Lys202. Thr237 is a pyridoxal 5'-phosphate binding site. Cys325 functions as the Cysteine persulfide intermediate in the catalytic mechanism. Cys325 serves as a coordination point for [2Fe-2S] cluster.

The protein belongs to the class-V pyridoxal-phosphate-dependent aminotransferase family. NifS/IscS subfamily. The cofactor is pyridoxal 5'-phosphate.

It carries out the reaction (sulfur carrier)-H + L-cysteine = (sulfur carrier)-SH + L-alanine. Catalyzes the removal of elemental sulfur from cysteine to produce alanine. The polypeptide is Putative cysteine desulfurase IscS 1 (iscS1) (Bacillus subtilis (strain 168)).